The primary structure comprises 21 residues: Maculatin-1.1 (21 aa).

Phenylalanine amide is present on phenylalanine 21.

As to expression, expressed by the skin dorsal glands.

The protein localises to the secreted. Its function is as follows. Maculatin-1.1 shows significant antibacterial activity against Gram-positive bacteria, less against Gram-negative bacteria. Maculatin-1.1.1 is inactive. In Ranoidea genimaculata (Brown-spotted tree frog), this protein is Maculatin-1.1.